Consider the following 114-residue polypeptide: Large ribosomal subunit protein bL20c (114 aa).

It belongs to the bacterial ribosomal protein bL20 family.

The protein resides in the plastid. Its subcellular location is the chloroplast. Functionally, binds directly to 23S ribosomal RNA and is necessary for the in vitro assembly process of the 50S ribosomal subunit. It is not involved in the protein synthesizing functions of that subunit. This Tetradesmus obliquus (Green alga) protein is Large ribosomal subunit protein bL20c.